A 178-amino-acid chain; its full sequence is CDP-diacylglycerol--glycerol-3-phosphate 3-phosphatidyltransferase (178 aa).

4 helical membrane-spanning segments follow: residues 5 to 25 (PNYL…LFYI), 32 to 52 (KLGA…GYIA), 61 to 81 (FGKM…TIML), and 145 to 165 (IIYL…LTII).

This sequence belongs to the CDP-alcohol phosphatidyltransferase class-I family.

The protein resides in the cell membrane. The catalysed reaction is a CDP-1,2-diacyl-sn-glycerol + sn-glycerol 3-phosphate = a 1,2-diacyl-sn-glycero-3-phospho-(1'-sn-glycero-3'-phosphate) + CMP + H(+). The protein operates within phospholipid metabolism; phosphatidylglycerol biosynthesis; phosphatidylglycerol from CDP-diacylglycerol: step 1/2. This protein catalyzes the committed step to the synthesis of the acidic phospholipids. This Rickettsia typhi (strain ATCC VR-144 / Wilmington) protein is CDP-diacylglycerol--glycerol-3-phosphate 3-phosphatidyltransferase (pgsA).